The chain runs to 404 residues: ATP phosphoribosyltransferase regulatory subunit (404 aa).

The protein belongs to the class-II aminoacyl-tRNA synthetase family. HisZ subfamily. In terms of assembly, heteromultimer composed of HisG and HisZ subunits.

It is found in the cytoplasm. The protein operates within amino-acid biosynthesis; L-histidine biosynthesis; L-histidine from 5-phospho-alpha-D-ribose 1-diphosphate: step 1/9. Its function is as follows. Required for the first step of histidine biosynthesis. May allow the feedback regulation of ATP phosphoribosyltransferase activity by histidine. This chain is ATP phosphoribosyltransferase regulatory subunit, found in Trichormus variabilis (strain ATCC 29413 / PCC 7937) (Anabaena variabilis).